A 541-amino-acid polypeptide reads, in one-letter code: Effector protein hopAB1 (541 aa).

Disordered stretches follow at residues 1-94, 168-222, and 317-338; these read MPGI…EAQQ, QRAL…RHPQ, and RQTT…SGRR. Residues 18–31 show a composition bias toward basic and acidic residues; the sequence is TDGEPVTEREHDSS. The span at 183 to 196 shows a compositional bias: low complexity; it reads SSSGSSQRSLIGRS.

The protein belongs to the HopAB family.

Its subcellular location is the secreted. Effector protein that plays different roles depending on the species and plant cultivars that interact with the pathogen. Acts as a virulence determinant by enhancing the development of disease symptoms and bacterial growth. Acts as an avirulence factor by eliciting hypersensitive response (HR) and plant resistance. The chain is Effector protein hopAB1 (hopAB1) from Pseudomonas savastanoi (Pseudomonas syringae pv. savastanoi).